Reading from the N-terminus, the 340-residue chain is Glyceraldehyde-3-phosphate dehydrogenase (340 aa).

NAD(+)-binding positions include 11–12 and G109; that span reads TI. D-glyceraldehyde 3-phosphate is bound at residue 138–140; it reads SCN. The Nucleophile role is filled by C139. Position 167 (R167) interacts with NAD(+). Residue 193 to 194 participates in D-glyceraldehyde 3-phosphate binding; that stretch reads HA. An NAD(+)-binding site is contributed by Q300.

Belongs to the glyceraldehyde-3-phosphate dehydrogenase family. Homotetramer.

It is found in the cytoplasm. The catalysed reaction is D-glyceraldehyde 3-phosphate + phosphate + NADP(+) = (2R)-3-phospho-glyceroyl phosphate + NADPH + H(+). The enzyme catalyses D-glyceraldehyde 3-phosphate + phosphate + NAD(+) = (2R)-3-phospho-glyceroyl phosphate + NADH + H(+). Its pathway is carbohydrate degradation; glycolysis; pyruvate from D-glyceraldehyde 3-phosphate: step 1/5. In Saccharolobus islandicus (strain L.S.2.15 / Lassen #1) (Sulfolobus islandicus), this protein is Glyceraldehyde-3-phosphate dehydrogenase.